The following is a 147-amino-acid chain: UPF0306 protein KPN78578_35330 (147 aa).

Belongs to the UPF0306 family.

This Klebsiella pneumoniae subsp. pneumoniae (strain ATCC 700721 / MGH 78578) protein is UPF0306 protein KPN78578_35330.